The primary structure comprises 166 residues: Bile acid 7alpha-dehydratase (166 aa).

As to quaternary structure, homodimer.

It catalyses the reaction 7alpha,12alpha-dihydroxy-3-oxochol-4-en-24-oyl-CoA = 12alpha-hydroxy-3-oxochola-4,6-dien-24-oyl-CoA + H2O. The enzyme catalyses 7alpha-hydroxy-3-oxochol-4-en-24-oyl-CoA = 3-oxochol-4,6-dien-24-oyl-CoA + H2O. It carries out the reaction 7alpha,12alpha-dihydroxy-3-oxochol-4-en-24-oate = 12alpha-hydroxy-3-oxochola-4,6-dien-24-oate + H2O. The catalysed reaction is 7alpha-hydroxy-3-oxochol-4-en-24-oate = 3-oxochola-4,6-dien-24-oate + H2O. It functions in the pathway lipid metabolism; bile acid biosynthesis. Its function is as follows. Functions in the bile acid 7alpha-dehydroxylation pathway, which forms secondary bile acids via the 7alpha-dehydroxylation of primary bile acids, and is carried out by intestinal anaerobic bacteria. Catalyzes the dehydration step in this pathway, yielding a 3-oxo-Delta(4,6)-bile acid-CoA intermediate. In vitro, can act on the free bile acids (non CoA-conjugated) 7-alpha,12-alpha-dihydroxy-3-oxochol-4-enoate and 7-alpha-hydroxy-3-oxochol-4-enoate, but not on 7-alpha,12-alpha-dihydroxy-3-oxo-5-beta-cholanate, 3-alpha,7-alpha,12-alpha-trihydroxy-5-beta-cholanate or 7-beta-hydroxy-3-oxochol-4-enoate. This Clostridium scindens (strain JCM 10418 / VPI 12708) protein is Bile acid 7alpha-dehydratase.